The chain runs to 245 residues: Endonuclease III (245 aa).

One can recognise a HhH domain in the interval 119-138 (MVDLFTLPGVGRKTANVILG). [4Fe-4S] cluster contacts are provided by cysteine 198, cysteine 205, cysteine 208, and cysteine 214.

The protein belongs to the Nth/MutY family. [4Fe-4S] cluster is required as a cofactor.

It catalyses the reaction 2'-deoxyribonucleotide-(2'-deoxyribose 5'-phosphate)-2'-deoxyribonucleotide-DNA = a 3'-end 2'-deoxyribonucleotide-(2,3-dehydro-2,3-deoxyribose 5'-phosphate)-DNA + a 5'-end 5'-phospho-2'-deoxyribonucleoside-DNA + H(+). DNA repair enzyme that has both DNA N-glycosylase activity and AP-lyase activity. The DNA N-glycosylase activity releases various damaged pyrimidines from DNA by cleaving the N-glycosidic bond, leaving an AP (apurinic/apyrimidinic) site. The AP-lyase activity cleaves the phosphodiester bond 3' to the AP site by a beta-elimination, leaving a 3'-terminal unsaturated sugar and a product with a terminal 5'-phosphate. The chain is Endonuclease III from Mycobacterium leprae (strain TN).